Reading from the N-terminus, the 445-residue chain is Plasmid recombination enzyme (445 aa).

2 residues coordinate DNA: Tyr45 and Tyr113.

This sequence belongs to the plasmid mobilization pre family.

In Bacillus thuringiensis, this protein is Plasmid recombination enzyme.